Consider the following 158-residue polypeptide: Na(+)/H(+) antiporter subunit E (158 aa).

2 consecutive transmembrane segments (helical) span residues 21 to 41 (SPSAAGFITGYILGMLSLFFF) and 51 to 71 (LWKLISIIKLCFIFIKELYLA).

It belongs to the CPA3 antiporters (TC 2.A.63) subunit E family. In terms of assembly, forms a heterooligomeric complex that consists of seven subunits: MrpA, MrpB, MrpC, MrpD, MrpE, MrpF and MrpG.

Its subcellular location is the cell membrane. In terms of biological role, mrp complex is a Na(+)/H(+) antiporter that is considered to be the major Na(+) excretion system in B.subtilis. Has a major role in Na(+) resistance and a minor role in Na(+)- and K(+)-dependent pH homeostasis as compared to TetB. MrpA may be the actual Na(+)/H(+) antiporter, although the six other Mrp proteins are all required for Na(+)/H(+) antiport activity and Na(+) resistance. MrpA is required for initiation of sporulation when external Na(+) concentration increases. Also transports Li(+) but not K(+), Ca(2+) or Mg(2+). This chain is Na(+)/H(+) antiporter subunit E (mrpE), found in Bacillus subtilis (strain 168).